A 297-amino-acid polypeptide reads, in one-letter code: Mitochondrial glycine transporter (297 aa).

Solcar repeat units lie at residues 5 to 81, 105 to 189, and 211 to 295; these read TGHL…MRTA, LSMY…LKHT, and TSTA…LIKH. Transmembrane regions (helical) follow at residues 8–33, 56–82, 111–136, 164–187, 215–241, and 270–288; these read LIGGFAGGLSSAVALQPLDLLKTRFQ, GTLPSAIRTSVGSALYLSSLNLMRTAL, LVTGAFARGTVGYITMPITIIKVRYE, GFGPTCLRDAPYSGLYVLLYEKLK, INSTSAILSASMATTVTAPFDTIKTRM, and GLSMRLTRKALSAGIAWGI.

Belongs to the mitochondrial carrier (TC 2.A.29) family. SLC25A38 subfamily.

It localises to the mitochondrion inner membrane. The enzyme catalyses glycine(in) = glycine(out). In terms of biological role, mitochondrial glycine transporter that imports glycine into the mitochondrial matrix. Plays an important role in providing glycine for the first enzymatic step in heme biosynthesis, the condensation of glycine with succinyl-CoA to produce 5-aminolevulinate (ALA) in the mitochondrial matrix. The polypeptide is Mitochondrial glycine transporter (Candida glabrata (strain ATCC 2001 / BCRC 20586 / JCM 3761 / NBRC 0622 / NRRL Y-65 / CBS 138) (Yeast)).